The following is an 83-amino-acid chain: UPF0248 protein PYRAB10580 (83 aa).

This sequence belongs to the UPF0248 family.

The polypeptide is UPF0248 protein PYRAB10580 (Pyrococcus abyssi (strain GE5 / Orsay)).